The following is a 224-amino-acid chain: A-type ATP synthase subunit D (224 aa).

Residues 200–209 (KKVKDKKEAQ) show a composition bias toward basic and acidic residues. The interval 200–224 (KKVKDKKEAQEEAADEAAAAESTGA) is disordered. A compositionally biased stretch (low complexity) spans 215 to 224 (EAAAAESTGA).

Belongs to the V-ATPase D subunit family. As to quaternary structure, has multiple subunits with at least A(3), B(3), C, D, E, F, H, I and proteolipid K(x).

The protein localises to the cell membrane. Component of the A-type ATP synthase that produces ATP from ADP in the presence of a proton gradient across the membrane. The sequence is that of A-type ATP synthase subunit D from Halobacterium salinarum (strain ATCC 29341 / DSM 671 / R1).